The primary structure comprises 294 residues: Porphobilinogen deaminase (294 aa).

An S-(dipyrrolylmethanemethyl)cysteine modification is found at Cys-232.

The protein belongs to the HMBS family. In terms of assembly, monomer. Dipyrromethane is required as a cofactor.

It catalyses the reaction 4 porphobilinogen + H2O = hydroxymethylbilane + 4 NH4(+). The protein operates within porphyrin-containing compound metabolism; protoporphyrin-IX biosynthesis; coproporphyrinogen-III from 5-aminolevulinate: step 2/4. Functionally, tetrapolymerization of the monopyrrole PBG into the hydroxymethylbilane pre-uroporphyrinogen in several discrete steps. The sequence is that of Porphobilinogen deaminase from Corynebacterium diphtheriae (strain ATCC 700971 / NCTC 13129 / Biotype gravis).